We begin with the raw amino-acid sequence, 408 residues long: Protein SPATA31F3 (408 aa).

Residues 11 to 31 traverse the membrane as a helical segment; sequence VGYPFYTYGSIIIIALIIWQV. Residues 51-71 form a disordered region; sequence QKVKQRAKEKTPRARRHSRKE. The residue at position 152 (S152) is a Phosphoserine. Disordered regions lie at residues 297 to 316 and 351 to 408; these read TKTK…MKGA and LPLS…SASS. Residues 351 to 392 are compositionally biased toward polar residues; that stretch reads LPLSSGSSKRSPLLTCATQPENPSHVSVSTSAEGTCLPQEST.

The protein belongs to the SPATA31 family.

The protein localises to the membrane. This Bos taurus (Bovine) protein is Protein SPATA31F3 (SPATA31F3).